The sequence spans 112 residues: High mobility group protein D (112 aa).

Positions 5–71 form a DNA-binding region, HMG box; sequence PKRPLSAYML…DYDRAVKEFE (67 aa). The residue at position 10 (Ser10) is a Phosphoserine. Tyr12 bears the Phosphotyrosine mark. A disordered region spans residues 72–112; sequence ANGGSSAANGGGAKKRAKPAKKVAKKSKKEESDEDDDDESE. Residues 84–98 show a composition bias toward basic residues; it reads AKKRAKPAKKVAKKS. Ser103 and Ser111 each carry phosphoserine. Over residues 103-112 the composition is skewed to acidic residues; the sequence is SDEDDDDESE.

The protein belongs to the HMGB family.

Its subcellular location is the nucleus. It localises to the chromosome. Functionally, binds preferentially single-stranded DNA and unwinds double-stranded DNA. Prefers sites containing the sequence 5'-ttg-3'. Facilitates DNA bending. Associated with early embryonic chromatin in the absence of histone H1. The protein is High mobility group protein D (HmgD) of Drosophila melanogaster (Fruit fly).